The sequence spans 99 residues: Large ribosomal subunit protein uL23 (99 aa).

The protein belongs to the universal ribosomal protein uL23 family. Part of the 50S ribosomal subunit. Contacts protein L29, and trigger factor when it is bound to the ribosome.

In terms of biological role, one of the early assembly proteins it binds 23S rRNA. One of the proteins that surrounds the polypeptide exit tunnel on the outside of the ribosome. Forms the main docking site for trigger factor binding to the ribosome. This chain is Large ribosomal subunit protein uL23, found in Psychromonas ingrahamii (strain DSM 17664 / CCUG 51855 / 37).